The primary structure comprises 84 residues: Apoptosis inhibitor Rv3654c (84 aa).

Positions 1-39 (MVARHRAQAAADLASLAAAARLPSGLAAACARATLVARA) are cleaved as a signal peptide.

As to quaternary structure, interacts with human polypyrimidine tract binding protein-associated splicing factor (PSF).

Its subcellular location is the secreted. It is found in the host cytoplasm. Effector protein that participates in the suppression of macrophage apoptosis by blocking the extrinsic pathway. Recognizes the host polypyrimidine tract binding protein-associated splicing factor (PSF), which probably leads to its cleavage, diminishing the level of caspase-8 in macrophages. The chain is Apoptosis inhibitor Rv3654c from Mycobacterium tuberculosis (strain ATCC 25618 / H37Rv).